The chain runs to 341 residues: GTP-binding protein REM 2 (341 aa).

A compositionally biased stretch (acidic residues) spans 1 to 13 (MHTDLDTDMDADT). Disordered stretches follow at residues 1–72 (MHTD…SMPV) and 84–106 (VDEL…GSGE). A compositionally biased stretch (polar residues) spans 18–32 (LCSSSSRQASPSGTP). S27 is modified (phosphoserine). Positions 43 to 54 (QKPEKLLAELDR) are enriched in basic and acidic residues. Residues 94–105 (SSSGSSDSLGSG) show a composition bias toward low complexity. GTP-binding positions include 122–129 (GESGVGKS), 230–233 (NKSD), and 261–262 (AA). A disordered region spans residues 282 to 309 (RGRGHAGGQRPEPSSPDGPAPPTRRESL). The segment covering 294-303 (PSSPDGPAPP) has biased composition (pro residues). Phosphoserine is present on S296.

The protein belongs to the small GTPase superfamily. RGK family. Expressed in brain and kidney.

Its subcellular location is the cell membrane. Its function is as follows. Binds GTP saturably and exhibits a low intrinsic rate of GTP hydrolysis. The protein is GTP-binding protein REM 2 (Rem2) of Rattus norvegicus (Rat).